A 96-amino-acid chain; its full sequence is Co-chaperonin GroES (96 aa).

This sequence belongs to the GroES chaperonin family. As to quaternary structure, heptamer of 7 subunits arranged in a ring. Interacts with the chaperonin GroEL.

It localises to the cytoplasm. In terms of biological role, together with the chaperonin GroEL, plays an essential role in assisting protein folding. The GroEL-GroES system forms a nano-cage that allows encapsulation of the non-native substrate proteins and provides a physical environment optimized to promote and accelerate protein folding. GroES binds to the apical surface of the GroEL ring, thereby capping the opening of the GroEL channel. The chain is Co-chaperonin GroES from Cupriavidus necator (strain ATCC 17699 / DSM 428 / KCTC 22496 / NCIMB 10442 / H16 / Stanier 337) (Ralstonia eutropha).